We begin with the raw amino-acid sequence, 424 residues long: UPF0597 protein Sputcn32_1209 (424 aa).

Belongs to the UPF0597 family.

The chain is UPF0597 protein Sputcn32_1209 from Shewanella putrefaciens (strain CN-32 / ATCC BAA-453).